A 597-amino-acid polypeptide reads, in one-letter code: Vacuolar protein sorting-associated protein 33A (597 aa).

This sequence belongs to the STXBP/unc-18/SEC1 family. Core component of at least two putative endosomal tethering complexes, the homotypic fusion and vacuole protein sorting (HOPS) complex and the class C core vacuole/endosome tethering (CORVET) complex. Their common core is composed of the class C Vps proteins VPS11, VPS16, VPS18 and VPS33A, which in HOPS further associates with VPS39 and VPS41 and in CORVET with VPS8 and TGFBRAP1. Interacts with RAB5C, UVRAG, STX17, MON1A and MON1B. Associates with adaptor protein complex 3 (AP-3) and clathrin. Interacts with PLEKHM1. Ubiquitous.

The protein localises to the cytoplasmic vesicle. It is found in the late endosome membrane. The protein resides in the lysosome membrane. Its subcellular location is the early endosome. It localises to the autophagosome. The protein localises to the clathrin-coated vesicle. Functionally, plays a role in vesicle-mediated protein trafficking to lysosomal compartments including the endocytic membrane transport and autophagic pathways. Believed to act as a core component of the putative HOPS and CORVET endosomal tethering complexes which are proposed to be involved in the Rab5-to-Rab7 endosome conversion probably implicating MON1A/B, and via binding SNAREs and SNARE complexes to mediate tethering and docking events during SNARE-mediated membrane fusion. The HOPS complex is proposed to be recruited to Rab7 on the late endosomal membrane and to regulate late endocytic, phagocytic and autophagic traffic towards lysosomes. The CORVET complex is proposed to function as a Rab5 effector to mediate early endosome fusion probably in specific endosome subpopulations. Required for fusion of endosomes and autophagosomes with lysosomes; the function is dependent on its association with VPS16 but not VIPAS39. The function in autophagosome-lysosome fusion implicates STX17 but not UVRAG. In Rattus norvegicus (Rat), this protein is Vacuolar protein sorting-associated protein 33A (Vps33a).